The chain runs to 151 residues: UPF0178 protein Hhal_1913 (151 aa).

The protein belongs to the UPF0178 family.

In Halorhodospira halophila (strain DSM 244 / SL1) (Ectothiorhodospira halophila (strain DSM 244 / SL1)), this protein is UPF0178 protein Hhal_1913.